Consider the following 89-residue polypeptide: Small ribosomal subunit protein uS17 (89 aa).

The protein belongs to the universal ribosomal protein uS17 family. In terms of assembly, part of the 30S ribosomal subunit.

Functionally, one of the primary rRNA binding proteins, it binds specifically to the 5'-end of 16S ribosomal RNA. This Lactiplantibacillus plantarum (strain ATCC BAA-793 / NCIMB 8826 / WCFS1) (Lactobacillus plantarum) protein is Small ribosomal subunit protein uS17.